We begin with the raw amino-acid sequence, 200 residues long: N-(5'-phosphoribosyl)anthranilate isomerase (200 aa).

It belongs to the TrpF family.

The enzyme catalyses N-(5-phospho-beta-D-ribosyl)anthranilate = 1-(2-carboxyphenylamino)-1-deoxy-D-ribulose 5-phosphate. It participates in amino-acid biosynthesis; L-tryptophan biosynthesis; L-tryptophan from chorismate: step 3/5. This is N-(5'-phosphoribosyl)anthranilate isomerase from Endomicrobium trichonymphae.